The following is a 123-amino-acid chain: Large ribosomal subunit protein bL20 (123 aa).

Belongs to the bacterial ribosomal protein bL20 family.

In terms of biological role, binds directly to 23S ribosomal RNA and is necessary for the in vitro assembly process of the 50S ribosomal subunit. It is not involved in the protein synthesizing functions of that subunit. This is Large ribosomal subunit protein bL20 from Chlamydia trachomatis serovar L2b (strain UCH-1/proctitis).